Here is a 2175-residue protein sequence, read N- to C-terminus: Non-reducing polyketide synthase PKS1 (2175 aa).

The segment at 5-242 (LLFGDQTAEQ…VSIPIYGPYH (238 aa)) is N-terminal acylcarrier protein transacylase domain (SAT). Positions 369 to 801 (TDKIAIVGMA…GGNTALLIED (433 aa)) constitute a Ketosynthase family 3 (KS3) domain. Active-site for beta-ketoacyl synthase activity residues include cysteine 541, histidine 676, and histidine 719. The interval 900–1212 (FCFTGQGSQY…ISTSICHLFT (313 aa)) is malonyl-CoA:ACP transacylase (MAT) domain. Residue serine 988 is the For acyl/malonyl transferase activity of the active site. The segment at 1285-1604 (STSCQNVISE…RKVLNVFLPP (320 aa)) is product template (PT) domain. The interval 1289-1424 (QNVISEEFDG…CTIRYEDKAV (136 aa)) is N-terminal hotdog fold. The 311-residue stretch at 1289–1599 (QNVISEEFDG…FQQIPRKVLN (311 aa)) folds into the PKS/mFAS DH domain. Histidine 1321 serves as the catalytic Proton acceptor; for dehydratase activity. A C-terminal hotdog fold region spans residues 1452–1599 (AHKVQRGMAY…FQQIPRKVLN (148 aa)). The active-site Proton donor; for dehydratase activity is the aspartate 1512. Residues 1640–1664 (PVRKSAGPAKAAAAPSMPKPSKVAA) form a disordered region. Over residues 1643–1664 (KSAGPAKAAAAPSMPKPSKVAA) the composition is skewed to low complexity. One can recognise a Carrier 1 domain in the interval 1666–1743 (KPAGSMVDKV…EMKKYFSQFN (78 aa)). At serine 1703 the chain carries O-(pantetheine 4'-phosphoryl)serine. Residues 1766–1804 (ATPFDEMSTPASSAPSVPQSDAGKPSPDSPTGDSLSDDV) form a disordered region. A compositionally biased stretch (polar residues) spans 1774–1784 (TPASSAPSVPQ). The 78-residue stretch at 1801 to 1878 (SDDVGDVSIA…DIENALGMRP (78 aa)) folds into the Carrier 2 domain. At serine 1838 the chain carries O-(pantetheine 4'-phosphoryl)serine. The interval 1879–1899 (KPKAVGPKLSKPSTKTDMNEV) is disordered. The span at 1889–1899 (KPSTKTDMNEV) shows a compositional bias: polar residues. A claisen cyclase domain region spans residues 1932 to 2158 (KVFFLPDGSG…GHHFSMMKDP (227 aa)). Residue serine 2002 is the For Claisen cyclase activity of the active site.

It depends on pantetheine 4'-phosphate as a cofactor.

The catalysed reaction is 6 malonyl-CoA + acetyl-CoA + 6 H(+) = naphtopyrone YWA1 + 6 CO2 + 7 CoA + H2O. It functions in the pathway pigment biosynthesis; melanin biosynthesis. In terms of biological role, non-reducing polyketide synthase; part of the gene cluster 29 that mediates the biosynthesis of mediates the biosynthesis of dihydroxynaphthalene (DHN)-melanin, a bluish-green pigment and a structural component of the conidial wall. The first step of the pathway is the production of the heptaketide naphtopyrone YWA1 by the polyketide synthase PKS1 though condensation of acetyl-CoA with malonyl-CoA. The chain is Non-reducing polyketide synthase PKS1 from Zymoseptoria tritici (strain CBS 115943 / IPO323) (Speckled leaf blotch fungus).